Here is a 196-residue protein sequence, read N- to C-terminus: Peptidyl-tRNA hydrolase (196 aa).

Tyr-14 is a tRNA binding site. The Proton acceptor role is filled by His-19. TRNA is bound by residues Phe-64, Asn-66, and Asn-112.

This sequence belongs to the PTH family. In terms of assembly, monomer.

The protein localises to the cytoplasm. It carries out the reaction an N-acyl-L-alpha-aminoacyl-tRNA + H2O = an N-acyl-L-amino acid + a tRNA + H(+). Its function is as follows. Hydrolyzes ribosome-free peptidyl-tRNAs (with 1 or more amino acids incorporated), which drop off the ribosome during protein synthesis, or as a result of ribosome stalling. Functionally, catalyzes the release of premature peptidyl moieties from peptidyl-tRNA molecules trapped in stalled 50S ribosomal subunits, and thus maintains levels of free tRNAs and 50S ribosomes. The protein is Peptidyl-tRNA hydrolase of Solibacter usitatus (strain Ellin6076).